Here is a 185-residue protein sequence, read N- to C-terminus: Peptidyl-tRNA hydrolase (185 aa).

A tRNA-binding site is contributed by Tyr-14. The active-site Proton acceptor is the His-19. TRNA contacts are provided by Tyr-65, Asn-67, and Asn-113.

This sequence belongs to the PTH family. Monomer.

The protein resides in the cytoplasm. The enzyme catalyses an N-acyl-L-alpha-aminoacyl-tRNA + H2O = an N-acyl-L-amino acid + a tRNA + H(+). Functionally, hydrolyzes ribosome-free peptidyl-tRNAs (with 1 or more amino acids incorporated), which drop off the ribosome during protein synthesis, or as a result of ribosome stalling. Catalyzes the release of premature peptidyl moieties from peptidyl-tRNA molecules trapped in stalled 50S ribosomal subunits, and thus maintains levels of free tRNAs and 50S ribosomes. This Rickettsia bellii (strain OSU 85-389) protein is Peptidyl-tRNA hydrolase.